The sequence spans 462 residues: MRNPLGLRFSTGHALLASALAPPCIIAFLETRYWWAGIALASLGVIVATVTFYGRRITGWVAAVYAWLRRRRRPPDSSSEPVVGATVKPGDHVAVRWQGEFLVAVIELIPRPFTPTVIVDGQAHTDDMLDTGLVEELLSVHCPDLEADIVSAGYRVGNTAAPDVVSLYQQVIGTDPAPANRRTWIVLRADPERTRKSAQRRDEGVAGLARYLVASATRIADRLASHGVDAVCGRSFDDYDHATDIGFVREKWSMIKGRDAYTAAYAAPGGPDVWWSARADHTITRVRVAPGMAPQSTVLLTTADKPKTPRGFARLFGGQRPALQGQHLVANRHCQLPIGSAGVLVGETVNRCPVYMPFDDVDIALNLGDAQTFTQFVVRAAAAGAMVTVGPQFEEFARLIGAHIGQEVKVAWPNATTYLGPHPGIDRVILRHNVIGTPRHRQLPIRRVSPPEESRYQMALPK.

Helical transmembrane passes span 9–29 (FSTG…IAFL) and 34–54 (WWAG…TFYG).

It belongs to the EccE family. In terms of assembly, part of the ESX-1 / type VII secretion system (T7SS), which is composed of cytosolic and membrane components. The ESX-1 membrane complex is composed of EccB1, EccCa1, EccCb1, EccD1 and EccE1.

The protein localises to the cell inner membrane. Part of the ESX-1 specialized secretion system, which delivers several virulence factors to host cells during infection, including the key virulence factors EsxA (ESAT-6) and EsxB (CFP-10). This is ESX-1 secretion system protein EccE1 from Mycobacterium tuberculosis (strain CDC 1551 / Oshkosh).